A 191-amino-acid chain; its full sequence is Elongation factor P (191 aa).

The protein belongs to the elongation factor P family.

The protein resides in the cytoplasm. It participates in protein biosynthesis; polypeptide chain elongation. Its function is as follows. Involved in peptide bond synthesis. Stimulates efficient translation and peptide-bond synthesis on native or reconstituted 70S ribosomes in vitro. Probably functions indirectly by altering the affinity of the ribosome for aminoacyl-tRNA, thus increasing their reactivity as acceptors for peptidyl transferase. This is Elongation factor P from Janthinobacterium sp. (strain Marseille) (Minibacterium massiliensis).